Here is a 346-residue protein sequence, read N- to C-terminus: Uroporphyrinogen decarboxylase (346 aa).

Substrate is bound by residues R21 to R25, D71, Y146, S201, and H316.

The protein belongs to the uroporphyrinogen decarboxylase family. In terms of assembly, homodimer.

The protein localises to the cytoplasm. The catalysed reaction is uroporphyrinogen III + 4 H(+) = coproporphyrinogen III + 4 CO2. The protein operates within porphyrin-containing compound metabolism; protoporphyrin-IX biosynthesis; coproporphyrinogen-III from 5-aminolevulinate: step 4/4. In terms of biological role, catalyzes the decarboxylation of four acetate groups of uroporphyrinogen-III to yield coproporphyrinogen-III. This is Uroporphyrinogen decarboxylase from Rickettsia rickettsii (strain Iowa).